Reading from the N-terminus, the 142-residue chain is Hemoglobin subunit beta-1 (142 aa).

A Globin domain is found at 2 to 142 (SLTDEEIRLI…VTEALSCQYH (141 aa)). Residues His-59 and His-88 each contribute to the heme b site.

The protein belongs to the globin family. As to quaternary structure, heterotetramer of two alpha chains and two beta chains. In terms of tissue distribution, red blood cells.

Involved in oxygen transport from the lung to the various peripheral tissues. This Torpedo marmorata (Marbled electric ray) protein is Hemoglobin subunit beta-1 (HBB1).